A 644-amino-acid polypeptide reads, in one-letter code: Macrolide export ATP-binding/permease protein MacB (644 aa).

Residues 4-242 (IECKNINRYF…SNVGRIREKA (239 aa)) enclose the ABC transporter domain. Position 40 to 47 (40 to 47 (GQSGSGKS)) interacts with ATP. 4 helical membrane-spanning segments follow: residues 270–290 (LLTM…VALG), 524–544 (IALI…LVSV), 574–594 (LICV…SLVF), and 607–627 (AMSV…FGFM).

It belongs to the ABC transporter superfamily. Macrolide exporter (TC 3.A.1.122) family. Homodimer.

It localises to the cell inner membrane. In terms of biological role, non-canonical ABC transporter that contains transmembrane domains (TMD), which form a pore in the inner membrane, and an ATP-binding domain (NBD), which is responsible for energy generation. Confers resistance against macrolides. The sequence is that of Macrolide export ATP-binding/permease protein MacB from Neisseria meningitidis serogroup B (strain ATCC BAA-335 / MC58).